A 1040-amino-acid chain; its full sequence is Multidrug resistance protein MdtB (1040 aa).

Transmembrane regions (helical) follow at residues 16-36, 342-362, 369-389, 396-416, 440-460, 472-492, 537-557, 869-889, 890-910, 911-931, 968-988, and 998-1018; these read FIMR…AGII, DTQF…YVFL, IIPA…MVFL, LTLM…IVVI, IGFT…PLLF, FAVT…TLTP, WATL…WIVI, LIVA…ESFI, HPVT…LALM, LSGS…IGIV, ILMT…STGV, and IGMV…TPVI.

It belongs to the resistance-nodulation-cell division (RND) (TC 2.A.6) family. MdtB subfamily. In terms of assembly, part of a tripartite efflux system composed of MdtA, MdtB and MdtC. MdtB forms a heteromultimer with MdtC.

It localises to the cell inner membrane. The sequence is that of Multidrug resistance protein MdtB from Enterobacter sp. (strain 638).